Here is a 285-residue protein sequence, read N- to C-terminus: Octanoyltransferase (285 aa).

The 228-residue stretch at leucine 50–isoleucine 277 folds into the BPL/LPL catalytic domain. Residues arginine 89–histidine 96, serine 189–glycine 191, and glycine 202–alanine 204 contribute to the substrate site. Cysteine 220 acts as the Acyl-thioester intermediate in catalysis.

The protein belongs to the LipB family.

The protein localises to the cytoplasm. The enzyme catalyses octanoyl-[ACP] + L-lysyl-[protein] = N(6)-octanoyl-L-lysyl-[protein] + holo-[ACP] + H(+). It participates in protein modification; protein lipoylation via endogenous pathway; protein N(6)-(lipoyl)lysine from octanoyl-[acyl-carrier-protein]: step 1/2. Its function is as follows. Catalyzes the transfer of endogenously produced octanoic acid from octanoyl-acyl-carrier-protein onto the lipoyl domains of lipoate-dependent enzymes. Lipoyl-ACP can also act as a substrate although octanoyl-ACP is likely to be the physiological substrate. The chain is Octanoyltransferase from Psychrobacter cryohalolentis (strain ATCC BAA-1226 / DSM 17306 / VKM B-2378 / K5).